A 131-amino-acid polypeptide reads, in one-letter code: Large ribosomal subunit protein uL22 (131 aa).

The protein belongs to the universal ribosomal protein uL22 family. As to quaternary structure, part of the 50S ribosomal subunit.

Functionally, this protein binds specifically to 23S rRNA; its binding is stimulated by other ribosomal proteins, e.g. L4, L17, and L20. It is important during the early stages of 50S assembly. It makes multiple contacts with different domains of the 23S rRNA in the assembled 50S subunit and ribosome. The globular domain of the protein is located near the polypeptide exit tunnel on the outside of the subunit, while an extended beta-hairpin is found that lines the wall of the exit tunnel in the center of the 70S ribosome. This Phytoplasma mali (strain AT) protein is Large ribosomal subunit protein uL22.